Reading from the N-terminus, the 327-residue chain is (-)-delta-cadinene synthase (327 aa).

5 residues coordinate Mg(2+): aspartate 84, aspartate 85, asparagine 222, threonine 226, and glutamate 230.

This sequence belongs to the terpene synthase family.

The catalysed reaction is (2E,6E)-farnesyl diphosphate = (-)-delta-cadinene + diphosphate. Functionally, catalyzes the conversion of (2E,6E)-farnesyl diphosphate into (-)-delta-cadinene. Cyclization mechanism involves an intermediate nerolidyl diphosphate leading to a helminthogermacradienyl cation. The protein is (-)-delta-cadinene synthase of Streptomyces clavuligerus.